Here is a 489-residue protein sequence, read N- to C-terminus: Anthranilate synthase component 1 1 (489 aa).

Residue 262 to 264 (PYS) participates in L-tryptophan binding. Residues 288–309 (DRIETEPIAGTRPRGETPDADD) are disordered. 297–298 (GT) is a chorismate binding site. Over residues 300 to 309 (PRGETPDADD) the composition is skewed to basic and acidic residues. Glu324 provides a ligand contact to Mg(2+). Residues Tyr412, Arg432, 446 to 448 (GAG), and Gly448 contribute to the chorismate site. Glu461 lines the Mg(2+) pocket.

The protein belongs to the anthranilate synthase component I family. As to quaternary structure, tetramer of two components I and two components II. Mg(2+) is required as a cofactor.

It catalyses the reaction chorismate + L-glutamine = anthranilate + pyruvate + L-glutamate + H(+). It functions in the pathway amino-acid biosynthesis; L-tryptophan biosynthesis; L-tryptophan from chorismate: step 1/5. In Haloarcula marismortui (strain ATCC 43049 / DSM 3752 / JCM 8966 / VKM B-1809) (Halobacterium marismortui), this protein is Anthranilate synthase component 1 1 (trpE1).